Reading from the N-terminus, the 177-residue chain is Adenine phosphoribosyltransferase (177 aa).

Belongs to the purine/pyrimidine phosphoribosyltransferase family. In terms of assembly, homodimer.

It is found in the cytoplasm. The catalysed reaction is AMP + diphosphate = 5-phospho-alpha-D-ribose 1-diphosphate + adenine. It participates in purine metabolism; AMP biosynthesis via salvage pathway; AMP from adenine: step 1/1. Its function is as follows. Catalyzes a salvage reaction resulting in the formation of AMP, that is energically less costly than de novo synthesis. In Leptospira biflexa serovar Patoc (strain Patoc 1 / Ames), this protein is Adenine phosphoribosyltransferase.